Reading from the N-terminus, the 152-residue chain is Ribosome maturation factor RimP (152 aa).

This sequence belongs to the RimP family.

The protein resides in the cytoplasm. Required for maturation of 30S ribosomal subunits. This chain is Ribosome maturation factor RimP, found in Burkholderia lata (strain ATCC 17760 / DSM 23089 / LMG 22485 / NCIMB 9086 / R18194 / 383).